The chain runs to 514 residues: 2,3-bisphosphoglycerate-independent phosphoglycerate mutase (514 aa).

The Mn(2+) site is built by aspartate 14 and serine 64. Serine 64 (phosphoserine intermediate) is an active-site residue. Substrate is bound by residues histidine 125, 155–156, arginine 187, arginine 193, 263–266, and lysine 336; these read RD and RADR. Mn(2+) is bound by residues aspartate 403, histidine 407, aspartate 444, histidine 445, and histidine 463.

Belongs to the BPG-independent phosphoglycerate mutase family. In terms of assembly, monomer. Mn(2+) serves as cofactor.

It catalyses the reaction (2R)-2-phosphoglycerate = (2R)-3-phosphoglycerate. It participates in carbohydrate degradation; glycolysis; pyruvate from D-glyceraldehyde 3-phosphate: step 3/5. Its function is as follows. Catalyzes the interconversion of 2-phosphoglycerate and 3-phosphoglycerate. The polypeptide is 2,3-bisphosphoglycerate-independent phosphoglycerate mutase (Shewanella putrefaciens (strain CN-32 / ATCC BAA-453)).